Reading from the N-terminus, the 149-residue chain is Transcriptional repressor NrdR (149 aa).

A zinc finger lies at 3–34 (CPFCSATDTKVIDSRLVADGHQVRRRRECVQC). The ATP-cone domain occupies 49–139 (PRVVKQDGSR…VYRAFEDVSE (91 aa)).

This sequence belongs to the NrdR family. Zn(2+) is required as a cofactor.

Functionally, negatively regulates transcription of bacterial ribonucleotide reductase nrd genes and operons by binding to NrdR-boxes. This Shewanella halifaxensis (strain HAW-EB4) protein is Transcriptional repressor NrdR.